Here is a 306-residue protein sequence, read N- to C-terminus: Myb family transcription factor MOF1 (306 aa).

The 61-residue stretch at 19–79 folds into the HTH myb-type domain; sequence RSKVPRLRWT…HLQMYRCSRL (61 aa). Positions 50–75 form a DNA-binding region, H-T-H motif; it reads PKLILQLMGVKGLTISHVKSHLQMYR.

In terms of assembly, interacts with TPR1, TPR2 and TPR3. Expressed in roots, leaves, leaf sheaths, culms, panicles, lemmas, paleas, lodicules, stamens, and pistils.

The protein resides in the nucleus. Functionally, transcriptional repressor that plays a role in the regulation of organ identity and spikelet meristem determinacy. Interacts with the TPR corepressors to possibly repress the expression of downstream target genes. The protein is Myb family transcription factor MOF1 of Oryza sativa subsp. japonica (Rice).